Consider the following 280-residue polypeptide: Energy-coupling factor transporter ATP-binding protein EcfA2 (280 aa).

The 243-residue stretch at Ile3 to Gly245 folds into the ABC transporter domain. Gly40 to Ser47 is a binding site for ATP.

It belongs to the ABC transporter superfamily. Energy-coupling factor EcfA family. As to quaternary structure, forms a stable energy-coupling factor (ECF) transporter complex composed of 2 membrane-embedded substrate-binding proteins (S component), 2 ATP-binding proteins (A component) and 2 transmembrane proteins (T component).

It is found in the cell membrane. Its function is as follows. ATP-binding (A) component of a common energy-coupling factor (ECF) ABC-transporter complex. Unlike classic ABC transporters this ECF transporter provides the energy necessary to transport a number of different substrates. This Streptococcus pyogenes serotype M28 (strain MGAS6180) protein is Energy-coupling factor transporter ATP-binding protein EcfA2.